A 347-amino-acid polypeptide reads, in one-letter code: Probable zinc transporter 8 (347 aa).

Positions 1-27 (MATTTQHMNQIFLVLLLISFAISPAIS) are cleaved as a signal peptide. At 28 to 51 (TVPKECETDSTDSCIDKTKALPLK) the chain is on the extracellular side. Residues 52 to 72 (IVAIVAILVTSMIGVAAPLFS) traverse the membrane as a helical segment. The Cytoplasmic segment spans residues 73-83 (RYVTFLHPDGK). A helical membrane pass occupies residues 84–104 (IFMIIKCFASGIILGTGFMHV). At 105–124 (LPDSFEMLSSPCLEDNPWHK) the chain is on the extracellular side. A helical membrane pass occupies residues 125-145 (FPFTGFVAMLSGLVTLAIDSI). Residues 146-192 (ATSLYTKKAVADDSEERTTPMIIQIDHLPLTTKERSSTCSKQLLRYR) are Cytoplasmic-facing. Residues 193 to 213 (VIATVLELGIIVHSVVIGLSL) form a helical membrane-spanning segment. Residues 214–224 (GATNDTCTIKG) lie on the Extracellular side of the membrane. A helical membrane pass occupies residues 225 to 245 (LIAALCFHQMFEGMGLGGCIL). Topologically, residues 246-254 (QAEYTNVKK) are cytoplasmic. A helical transmembrane segment spans residues 255–275 (FVMAFFFAVTTPSGIALGIAL). The Extracellular portion of the chain corresponds to 276–286 (SSVYKDNSPTA). Residues 287–307 (LITVGLLNACSAGLLIYMALV) form a helical membrane-spanning segment. Residues 308–326 (DLLAAEFMGSMLQRSVKLQ) are Cytoplasmic-facing. The helical transmembrane segment at 327–347 (LNCFGAALLGCGGMSVLAKWA) threads the bilayer.

The protein belongs to the ZIP transporter (TC 2.A.5) family.

The protein localises to the cell membrane. Its function is as follows. Probably mediates zinc uptake from the rhizosphere. In Arabidopsis thaliana (Mouse-ear cress), this protein is Probable zinc transporter 8 (ZIP8).